The following is a 643-amino-acid chain: MHGLMLAGLLALPLSVLGHPTESHSSGISRRAIDITSYRLPQISKYTKSDAVPKQDGESFTTSSTGNDNSSSGDYVTTATNWLKKTLPKATYRLVKDHYIGDSGIGHVHFRQTAHGIDIDNTDFNVNIGRDGKVFSFGNSFYDGEIPKANPMVKRDFSDPVNALHGAIQILNLPVTAKPENVKAKPVEGKENFKFEGTSGALSDPKAQLVYLQKDGGLVLSWKVETDVGDNWLLTYVDANKNDKVHSVVDYVSAAEYQVYPWGINDPTEGNRTTLHLPWLKTLSTDWHIDGKGWYSTTRGNNAIAQENPTGGPEYENNYRPKSPLFIFKYPYSKAMTPPSSYRDASITQLFYTTNVYHDVLYILGFNEKAGNFQINNWNKGGVGGDYAILNSQDGSGVNNANFATPPDGQPGRMRMYTWNASIPERDGCFEAGIVIHEYTHGVSNRLTGGPENSRCLAALESGGMGEGWSDFFATAIRLKPGDTRVTDYTMGEWASNRPNGIRKYRYSTSLTTNPHMYVDADGLTSVHAIGNIWASMLYELLWNLIDKHGKGDVTKIRPVLKNGVPTDGRHLAMKIVLDGMALQPCLPNFVQARDAILDADKNLTQGSNKCEIWKAFAKRGLGVGAVFNLSKRTGSNELPAGC.

A signal peptide spans 1-18 (MHGLMLAGLLALPLSVLG). The propeptide occupies 19–254 (HPTESHSSGI…VHSVVDYVSA (236 aa)). Basic and acidic residues predominate over residues 47–57 (TKSDAVPKQDG). A disordered region spans residues 47–73 (TKSDAVPKQDGESFTTSSTGNDNSSSG). Residues 61–73 (TTSSTGNDNSSSG) show a composition bias toward low complexity. Asn-271 and Asn-420 each carry an N-linked (GlcNAc...) asparagine glycan. His-437 is a Zn(2+) binding site. The active site involves Glu-438. Residue His-441 coordinates Zn(2+). N-linked (GlcNAc...) asparagine glycosylation is found at Asn-603 and Asn-629.

This sequence belongs to the peptidase M36 family. Zn(2+) is required as a cofactor.

The protein resides in the secreted. Its function is as follows. Secreted metalloproteinase probably acting as a virulence factor. The protein is Extracellular metalloproteinase 4 (MEP4) of Trichophyton rubrum (Athlete's foot fungus).